A 338-amino-acid chain; its full sequence is MDIWYGTAAVPKDLDNSAVTIGVFDGVHRGHQKLINATVEKAREVGAKAIMVTFDPHPVSVFLPRRAPLGITTLAERFALAESFGIDGVLVIDFTRELSGTSPEKYVEFLLEDTLHASHVVVGANFTFGENAAGTADSLRQICQSRLTVDVIDLLDDEGVRISSTTVREFLSEGDVARANWALGRHFYVTGPVVRGAGRGGKELGFPTANQYFHDTVALPADGVYAGWLTILPTEAPVSGNMEPEVAYAAAISVGTNPTFGDEQRSVESFVLDRDADLYGHDVKVEFVDHVRAMEKFDSVEQLLEVMAKDVQKTRTLLAQDVQAHKMAPETYFLQAES.

This sequence belongs to the RibF family. The cofactor is a divalent metal cation.

The catalysed reaction is riboflavin + ATP = FMN + ADP + H(+). It carries out the reaction FMN + ATP + H(+) = FAD + diphosphate. It participates in cofactor biosynthesis; FAD biosynthesis; FAD from FMN: step 1/1. Its pathway is cofactor biosynthesis; FMN biosynthesis; FMN from riboflavin (ATP route): step 1/1. Higher divalent cation concentrations lead to decrease in the turnover of riboflavin and the 5'-phosphotransferase activity, while the adenylyltransferase activity increases. Catalyzes the phosphorylation of riboflavin to FMN followed by the adenylation of FMN to FAD. The chain is Bifunctional riboflavin kinase/FMN adenylyltransferase (ribF) from Corynebacterium ammoniagenes (Brevibacterium ammoniagenes).